The chain runs to 407 residues: Tryptophan synthase beta chain (407 aa).

K86 is subject to N6-(pyridoxal phosphate)lysine.

The protein belongs to the TrpB family. As to quaternary structure, tetramer of two alpha and two beta chains. Requires pyridoxal 5'-phosphate as cofactor.

The enzyme catalyses (1S,2R)-1-C-(indol-3-yl)glycerol 3-phosphate + L-serine = D-glyceraldehyde 3-phosphate + L-tryptophan + H2O. It participates in amino-acid biosynthesis; L-tryptophan biosynthesis; L-tryptophan from chorismate: step 5/5. Functionally, the beta subunit is responsible for the synthesis of L-tryptophan from indole and L-serine. The sequence is that of Tryptophan synthase beta chain from Shewanella woodyi (strain ATCC 51908 / MS32).